We begin with the raw amino-acid sequence, 380 residues long: Chaperone protein DnaJ (380 aa).

The region spanning 5–70 is the J domain; that stretch reads DYYEILGVAK…QKRAAYDQYG (66 aa). The CR-type zinc-finger motif lies at 135–213; it reads GVSKEIRIPT…CHGHGRVEKS (79 aa). Residues Cys148, Cys151, Cys165, Cys168, Cys187, Cys190, Cys201, and Cys204 each coordinate Zn(2+). 4 CXXCXGXG motif repeats span residues 148–155, 165–172, 187–194, and 201–208; these read CGVCHGSG, CSTCHGAG, CPTCHGRG, and CNACHGHG.

It belongs to the DnaJ family. In terms of assembly, homodimer. Zn(2+) serves as cofactor.

The protein resides in the cytoplasm. Its function is as follows. Participates actively in the response to hyperosmotic and heat shock by preventing the aggregation of stress-denatured proteins and by disaggregating proteins, also in an autonomous, DnaK-independent fashion. Unfolded proteins bind initially to DnaJ; upon interaction with the DnaJ-bound protein, DnaK hydrolyzes its bound ATP, resulting in the formation of a stable complex. GrpE releases ADP from DnaK; ATP binding to DnaK triggers the release of the substrate protein, thus completing the reaction cycle. Several rounds of ATP-dependent interactions between DnaJ, DnaK and GrpE are required for fully efficient folding. Also involved, together with DnaK and GrpE, in the DNA replication of plasmids through activation of initiation proteins. In Erwinia tasmaniensis (strain DSM 17950 / CFBP 7177 / CIP 109463 / NCPPB 4357 / Et1/99), this protein is Chaperone protein DnaJ.